We begin with the raw amino-acid sequence, 89 residues long: Small ribosomal subunit protein uS15 (89 aa).

The protein belongs to the universal ribosomal protein uS15 family. Part of the 30S ribosomal subunit. Forms a bridge to the 50S subunit in the 70S ribosome, contacting the 23S rRNA.

Its function is as follows. One of the primary rRNA binding proteins, it binds directly to 16S rRNA where it helps nucleate assembly of the platform of the 30S subunit by binding and bridging several RNA helices of the 16S rRNA. Functionally, forms an intersubunit bridge (bridge B4) with the 23S rRNA of the 50S subunit in the ribosome. The polypeptide is Small ribosomal subunit protein uS15 (Methylocella silvestris (strain DSM 15510 / CIP 108128 / LMG 27833 / NCIMB 13906 / BL2)).